The sequence spans 250 residues: Ribonuclease HII (250 aa).

In terms of domain architecture, RNase H type-2 spans 66-250; sequence QLVAGVDEVG…SFAPVSEYEK (185 aa). A divalent metal cation-binding residues include Asp72, Glu73, and Asp164.

This sequence belongs to the RNase HII family. Mn(2+) is required as a cofactor. It depends on Mg(2+) as a cofactor.

It is found in the cytoplasm. It catalyses the reaction Endonucleolytic cleavage to 5'-phosphomonoester.. Functionally, endonuclease that specifically degrades the RNA of RNA-DNA hybrids. This Lactobacillus johnsonii (strain CNCM I-12250 / La1 / NCC 533) protein is Ribonuclease HII.